The primary structure comprises 443 residues: Minovincinine 19-hydroxy-O-acetyltransferase (443 aa).

Catalysis depends on H157, which acts as the Proton acceptor. A Nuclear localization signal motif is present at residues 215–222 (RKRFLFSP). A coiled-coil region spans residues 316–343 (TKLVIGELRKAKDKLKNLSQEKLNYVAR). The Proton acceptor role is filled by D384.

It belongs to the plant acyltransferase family. As to quaternary structure, monomer. In terms of tissue distribution, expressed in cortical cells of the root tip, especially in hairy roots, as well as in etiolated seedlings. Mostly expressed in roots, and, at lower levels, in leaves.

It is found in the cytoplasm. The protein localises to the nucleus. The catalysed reaction is (+)-minovincinine + acetyl-CoA = (+)-echitovenine + CoA. It functions in the pathway alkaloid biosynthesis. In terms of biological role, component of the monoterpenoid indole alkaloids (MIAs, e.g. echitovenine, tabersonine, lochnericine, 19-hydroxytabersonine and horhammericine) biosynthetic pathway; MIAs are used in cancer treatment and other medical applications. Acyltransferase catalyzing the conversion of (+)-minovincinine to (+)-echitovenine. The polypeptide is Minovincinine 19-hydroxy-O-acetyltransferase (Catharanthus roseus (Madagascar periwinkle)).